The following is a 453-amino-acid chain: 4,4'-diapolycopene-4,4'-dial dehydrogenase (453 aa).

The segment covering 1-20 (MPDNDSHSLKSLPERQREDL) has biased composition (basic and acidic residues). Positions 1 to 23 (MPDNDSHSLKSLPERQREDLFSA) are disordered. Residues Glu215 and Cys249 contribute to the active site.

This sequence belongs to the aldehyde dehydrogenase family.

It catalyses the reaction all-trans-4,4'-diapolycopene-4,4'-dial + 2 A + 2 H2O = all-trans-4,4'-diapolycopene-4,4'-dioate + 2 AH2 + 2 H(+). It functions in the pathway carotenoid biosynthesis. In terms of biological role, involved in the biosynthesis of the major C30 carotenoid 4,4'-diapolycopene-4,4'-dioic acid, which protects B.firmus from peroxidative reactions. Catalyzes the oxidation of 4,4'-diapolycopene-4,4'-dial to yield 4,4'-diapolycopene-4,4'-dioic aci. In Cytobacillus firmus (Bacillus firmus), this protein is 4,4'-diapolycopene-4,4'-dial dehydrogenase.